The following is a 525-amino-acid chain: uncharacterized protein (525 aa).

Positions 21–48 form a DNA-binding region, zn(2)-C6 fungal-type; sequence CLICRSMRKKCDEVHPQCGRCLKAGKQC.

It localises to the cytoplasm. Its subcellular location is the nucleus. This is an uncharacterized protein from Schizosaccharomyces pombe (strain 972 / ATCC 24843) (Fission yeast).